Here is a 330-residue protein sequence, read N- to C-terminus: Ribosomal RNA large subunit methyltransferase F (330 aa).

The protein belongs to the methyltransferase superfamily. METTL16/RlmF family.

It is found in the cytoplasm. The catalysed reaction is adenosine(1618) in 23S rRNA + S-adenosyl-L-methionine = N(6)-methyladenosine(1618) in 23S rRNA + S-adenosyl-L-homocysteine + H(+). Its function is as follows. Specifically methylates the adenine in position 1618 of 23S rRNA. This is Ribosomal RNA large subunit methyltransferase F from Pseudoalteromonas atlantica (strain T6c / ATCC BAA-1087).